The chain runs to 243 residues: Purine nucleoside phosphorylase YfiH (243 aa).

H71, C107, and H124 together coordinate Zn(2+).

It belongs to the purine nucleoside phosphorylase YfiH/LACC1 family. Homodimer. The cofactor is Cu(2+). It depends on Zn(2+) as a cofactor.

The catalysed reaction is adenosine + phosphate = alpha-D-ribose 1-phosphate + adenine. The enzyme catalyses S-methyl-5'-thioadenosine + phosphate = 5-(methylsulfanyl)-alpha-D-ribose 1-phosphate + adenine. It catalyses the reaction inosine + phosphate = alpha-D-ribose 1-phosphate + hypoxanthine. It carries out the reaction adenosine + H2O + H(+) = inosine + NH4(+). Purine nucleoside enzyme that catalyzes the phosphorolysis of adenosine and inosine nucleosides, yielding D-ribose 1-phosphate and the respective free bases, adenine and hypoxanthine. Also catalyzes the phosphorolysis of S-methyl-5'-thioadenosine into adenine and S-methyl-5-thio-alpha-D-ribose 1-phosphate. Also has adenosine deaminase activity. May also act as a polyphenol oxidase: able to oxidize syringaldazine and 2,2'-azino-bis(3-ethylbenzthiazoline-6-sulfonic acid) (ABTS) in vitro. This is Purine nucleoside phosphorylase YfiH from Escherichia coli (strain K12).